Consider the following 219-residue polypeptide: N-(5'-phosphoribosyl)anthranilate isomerase (219 aa).

The protein belongs to the TrpF family.

It carries out the reaction N-(5-phospho-beta-D-ribosyl)anthranilate = 1-(2-carboxyphenylamino)-1-deoxy-D-ribulose 5-phosphate. Its pathway is amino-acid biosynthesis; L-tryptophan biosynthesis; L-tryptophan from chorismate: step 3/5. The chain is N-(5'-phosphoribosyl)anthranilate isomerase from Bordetella avium (strain 197N).